The sequence spans 907 residues: MPYIFAFFCTGFLGAVVGANFPNNIQIGGLFPNQQSQEHAAFRFALSQLTEPPKLLPQIDIVNISDSFEMTYRFCSQFSKGVYAIFGFYERRTVNMLTSFCGALHVCFITPSFPVDTSNQFVLQLRPELQEALISIIDHYKWQTFVYIYDADRGLSVLQRVLDTAAEKNWQVTAVNILTTTEEGYRMLFQDLEKKKERLVVVDCESERLNAILGQIVKLEKNGIGYHYILANLGFMDIDLNKFKESGANVTGFQLVNYTDTIPARIMQQWRTSDSRDHTRVDWKRPKYTSALTYDGVKVMAEAFQSLRRQRIDISRRGNAGDCLANPAVPWGQGIDIQRALQQVRFEGLTGNVQFNEKGRRTNYTLHVIEMKHDGIRKIGYWNEDDKFVPAATDAQAGGDNSSVQNRTYIVTTILEDPYVMLKKNANQFEGNDRYEGYCVELAAEIAKHVGYSYRLEIVSDGKYGARDPDTKAWNGMVGELVYGRADVAVAPLTITLVREEVIDFSKPFMSLGISIMIKKPQKSKPGVFSFLDPLAYEIWMCIVFAYIGVSVVLFLVSRFSPYEWHSEEFEEGRDQTTSDQSNEFGIFNSLWFSLGAFMQQGCDISPRSLSGRIVGGVWWFFTLIIISSYTANLAAFLTVERMVSPIESAEDLAKQTEIAYGTLEAGSTKEFFRRSKIAVFEKMWTYMKSAEPSVFVRTTEEGMIRVRKSKGKYAYLLESTMNEYIEQRKPCDTMKVGGNLDSKGYGIATPKGSALRNPVNLAVLKLNEQGLLDKLKNKWWYDKGECGSGGGDSKDKTSALSLSNVAGVFYILIGGLGLAMLVALIEFCYKSRSESKRMKGFCLIPQQSINEAIRTSTLPRNSGAGASGGGGSGENGRVVSQDFPKSMQSIPCMSHSSGMPLGATGL.

The N-terminal stretch at 1–18 is a signal peptide; it reads MPYIFAFFCTGFLGAVVG. Over 19–536 the chain is Extracellular; the sequence is ANFPNNIQIG…GVFSFLDPLA (518 aa). 6 N-linked (GlcNAc...) asparagine glycosylation sites follow: asparagine 63, asparagine 249, asparagine 257, asparagine 363, asparagine 401, and asparagine 406. Residues cysteine 75 and cysteine 323 are joined by a disulfide bond. L-glutamate contacts are provided by proline 492, threonine 494, and arginine 499. Residues 537 to 557 traverse the membrane as a helical segment; that stretch reads YEIWMCIVFAYIGVSVVLFLV. Over 558–584 the chain is Cytoplasmic; the sequence is SRFSPYEWHSEEFEEGRDQTTSDQSNE. The helical; Pore-forming intramembrane region spans 585 to 600; that stretch reads FGIFNSLWFSLGAFMQ. Residues 601 to 603 lie within the membrane without spanning it; that stretch reads QGC. Cysteine 603 is lipidated: S-palmitoyl cysteine. The Cytoplasmic portion of the chain corresponds to 604–609; it reads DISPRS. The helical transmembrane segment at 610–630 threads the bilayer; that stretch reads LSGRIVGGVWWFFTLIIISSY. Residues 631–805 lie on the Extracellular side of the membrane; it reads TANLAAFLTV…DKTSALSLSN (175 aa). Residue serine 645 is modified to Phosphoserine. 2 residues coordinate L-glutamate: serine 668 and threonine 669. Serine 710 is modified (phosphoserine; by PKC). Glutamate 719 serves as a coordination point for L-glutamate. Residues cysteine 732 and cysteine 787 are joined by a disulfide bond. Residues 806–826 traverse the membrane as a helical segment; the sequence is VAGVFYILIGGLGLAMLVALI. The Cytoplasmic portion of the chain corresponds to 827 to 907; the sequence is EFCYKSRSES…SGMPLGATGL (81 aa). A lipid anchor (S-palmitoyl cysteine) is attached at cysteine 829. Residue serine 849 is modified to Phosphoserine; by PKC, PKA and CAMK2. The interval 857 to 881 is disordered; it reads STLPRNSGAGASGGGGSGENGRVVS. Serine 863 is modified (phosphoserine; by PKC, PKA and PKG/PRKG2). Residues 866–875 show a composition bias toward gly residues; sequence GASGGGGSGE. Residues 904–907 carry the PDZ-binding motif; that stretch reads ATGL.

This sequence belongs to the glutamate-gated ion channel (TC 1.A.10.1) family. GRIA1 subfamily. Homotetramer or heterotetramer of pore-forming glutamate receptor subunits; heteromeric assembly can be the result of both receptor subtype and flip-flop forms and according the composition, one partner can be dominant with respect to the fast desensitizing current component, whereas the other can determine the steady-state component. Tetramers may be formed by the dimerization of dimers. Found in a complex with GRIA2, GRIA3, GRIA4, CNIH2, CNIH3, CACNG2, CACNG3, CACNG4, CACNG5, CACNG7 and CACNG8. Interacts with HIP1 and RASGRF2. Interacts with SYNDIG1 and GRIA2. Interacts with DLG1 (via C-terminus). Interacts with LRFN1. Interacts with PRKG2. Interacts with CNIH2 and CACNG2. Interacts with CACNG5; this interaction modulates the gating. Interacts (via C-terminus) with PDLIM4 (via LIM domain); this interaction as well as the interaction of PDLIM4 with alpha-actinin is required for their colocalization in early endosomes. Interacts with SNX27 (via PDZ domain); the interaction is required for recycling to the plasma membrane when endocytosed and prevent degradation in lysosomes. Interacts (via PDZ-binding motif) with SHANK3 (via PDZ domain). Interacts with CACNG3; associates GRIA1 with the adapter protein complex 4 (AP-4) to target GRIA1 to the somatodendritic compartment of neurons. Interacts with CACNG2; this interaction mediates traffick to the plasma membrane and modulation of desensitization. Interaction with CNIH2 and CNIH3; this interaction promotes expression at the plasma membrane and extensively modulates their gating properties by slowing deactivation and desensitization kinetics. Found in a complex with GRIA2, GRIA3, GRIA4, DLG4, CACNG8 and CNIH2. Phosphorylated at Ser-645. Phosphorylated at Ser-710 by PKC. Phosphorylated at Ser-849 by PKC, PKA and CAMK2. Phosphorylated at Ser-863 by PKC, PKA and PRKG2. Phosphorylation of Ser-863 is reduced by induction of long-term depression and increased by induction of long-term potentiation. In terms of processing, palmitoylated. Depalmitoylated by CPT1C and upon L-glutamate stimulation. ZDHHC3/GODZ specifically palmitoylates Cys-603, which leads to Golgi retention and decreased cell surface expression. In contrast, Cys-829 palmitoylation does not affect cell surface expression but regulates stimulation-dependent endocytosis. As to expression, detected in cerebellum (at protein level).

The protein resides in the cell membrane. It localises to the endoplasmic reticulum membrane. It is found in the postsynaptic cell membrane. The protein localises to the postsynaptic density membrane. Its subcellular location is the cell projection. The protein resides in the dendrite. It localises to the dendritic spine. It is found in the early endosome membrane. The protein localises to the recycling endosome membrane. Its subcellular location is the presynapse. The protein resides in the synapse. It carries out the reaction Ca(2+)(in) = Ca(2+)(out). It catalyses the reaction Na(+)(in) = Na(+)(out). The catalysed reaction is Mg(2+)(in) = Mg(2+)(out). The enzyme catalyses Li(+)(in) = Li(+)(out). It carries out the reaction K(+)(in) = K(+)(out). It catalyses the reaction Sr(2+)(in) = Sr(2+)(out). Its activity is regulated as follows. Glutamate-gated receptor activity inhibited by DNQX (6,7-dinitroquinoxaline-2,3-dione). Ionotropic glutamate receptor that functions as a ligand-gated cation channel, gated by L-glutamate and glutamatergic agonists such as alpha-amino-3-hydroxy-5-methyl-4-isoxazolepropionic acid (AMPA), quisqualic acid, and kainic acid. L-glutamate acts as an excitatory neurotransmitter at many synapses in the central nervous system. Binding of the excitatory neurotransmitter L-glutamate induces a conformation change, leading to the opening of the cation channel, and thereby converts the chemical signal to an electrical impulse upon entry of monovalent and divalent cations such as sodium and calcium. The receptor then desensitizes rapidly and enters in a transient inactive state, characterized by the presence of bound agonist. In the presence of CACNG2 or CACNG4 or CACNG7 or CACNG8, shows resensitization which is characterized by a delayed accumulation of current flux upon continued application of L-glutamate. Resensitization is blocked by CNIH2 through interaction with CACNG8 in the CACNG8-containing AMPA receptors complex. Calcium (Ca(2+)) permeability depends on subunits composition and, heteromeric channels containing edited GRIA2 subunit are calcium-impermeable. Also permeable to other divalents cations such as strontium(2+) and magnesium(2+) and monovalent cations such as potassium(1+) and lithium(1+). This Rattus norvegicus (Rat) protein is Glutamate receptor 1.